Reading from the N-terminus, the 118-residue chain is Small ribosomal subunit protein uS13 (118 aa).

The disordered stretch occupies residues G94–K118.

Belongs to the universal ribosomal protein uS13 family. Part of the 30S ribosomal subunit. Forms a loose heterodimer with protein S19. Forms two bridges to the 50S subunit in the 70S ribosome.

Located at the top of the head of the 30S subunit, it contacts several helices of the 16S rRNA. In the 70S ribosome it contacts the 23S rRNA (bridge B1a) and protein L5 of the 50S subunit (bridge B1b), connecting the 2 subunits; these bridges are implicated in subunit movement. Contacts the tRNAs in the A and P-sites. The protein is Small ribosomal subunit protein uS13 of Chromohalobacter salexigens (strain ATCC BAA-138 / DSM 3043 / CIP 106854 / NCIMB 13768 / 1H11).